Here is a 752-residue protein sequence, read N- to C-terminus: DNA topoisomerase 4 subunit A (752 aa).

A Topo IIA-type catalytic domain is found at 31-494; it reads LPFIGDGLKP…EAKAMSEHDM (464 aa). Tyr120 (O-(5'-phospho-DNA)-tyrosine intermediate) is an active-site residue. The interval 472–492 is disordered; it reads YGDDRRSPLREREEAKAMSEH. The span at 473 to 492 shows a compositional bias: basic and acidic residues; sequence GDDRRSPLREREEAKAMSEH.

It belongs to the type II topoisomerase GyrA/ParC subunit family. ParC type 1 subfamily. As to quaternary structure, heterotetramer composed of ParC and ParE.

It is found in the cell membrane. It catalyses the reaction ATP-dependent breakage, passage and rejoining of double-stranded DNA.. In terms of biological role, topoisomerase IV is essential for chromosome segregation. It relaxes supercoiled DNA. Performs the decatenation events required during the replication of a circular DNA molecule. The polypeptide is DNA topoisomerase 4 subunit A (Salmonella typhimurium (strain LT2 / SGSC1412 / ATCC 700720)).